A 214-amino-acid polypeptide reads, in one-letter code: Adenylate kinase (214 aa).

10–15 (GAGKGT) serves as a coordination point for ATP. The interval 30 to 59 (STGDMLRAAIKAGTELGNAAKRVMDEGKLV) is NMP. AMP is bound by residues Thr31, Arg36, 57-59 (KLV), 85-88 (GFPR), and Gln92. The LID stretch occupies residues 122-159 (GRRVHPASGRVYHLQYNPPQNDGKDDETGEDLVIRADD). Residues Arg123 and 132 to 133 (VY) contribute to the ATP site. Residues Arg156 and Arg167 each contribute to the AMP site. Lys200 is a binding site for ATP.

Belongs to the adenylate kinase family. In terms of assembly, monomer.

It is found in the cytoplasm. The enzyme catalyses AMP + ATP = 2 ADP. It functions in the pathway purine metabolism; AMP biosynthesis via salvage pathway; AMP from ADP: step 1/1. Its function is as follows. Catalyzes the reversible transfer of the terminal phosphate group between ATP and AMP. Plays an important role in cellular energy homeostasis and in adenine nucleotide metabolism. The sequence is that of Adenylate kinase from Pseudoalteromonas atlantica (strain T6c / ATCC BAA-1087).